Reading from the N-terminus, the 307-residue chain is Homoserine O-acetyltransferase (307 aa).

Cys-142 serves as the catalytic Acyl-thioester intermediate. Residues Lys-163 and Ser-192 each coordinate substrate. The active-site Proton acceptor is the His-235. Glu-237 is a catalytic residue. Arg-249 contacts substrate.

The protein belongs to the MetA family.

Its subcellular location is the cytoplasm. It carries out the reaction L-homoserine + acetyl-CoA = O-acetyl-L-homoserine + CoA. It functions in the pathway amino-acid biosynthesis; L-methionine biosynthesis via de novo pathway; O-acetyl-L-homoserine from L-homoserine: step 1/1. Its function is as follows. Transfers an acetyl group from acetyl-CoA to L-homoserine, forming acetyl-L-homoserine. The protein is Homoserine O-acetyltransferase of Desulfitobacterium hafniense (strain Y51).